A 302-amino-acid polypeptide reads, in one-letter code: Zinc transporter ZIP1 (302 aa).

At 1–6 (MDYLLQ) the chain is on the extracellular side. A helical transmembrane segment spans residues 7–27 (VKVGALVGLLLLTLFFGFIPA). Residues 28-44 (RMKWFHVTGGTELHKAV) lie on the Cytoplasmic side of the membrane. Residues 45–65 (LSFVSCFAGGVFLSACLLDII) traverse the membrane as a helical segment. The Extracellular portion of the chain corresponds to 66-86 (PDYLSDIHGELQKRDLDDGFP). A helical membrane pass occupies residues 87-107 (LPEFIMACGFFTVLILEKMVL). The Cytoplasmic segment spans residues 108–158 (SCTEGHRNEETAPLLAPAAPNGHAHGHPSVNDLEGSGHHVHVDFHAHSSFR). The chain crosses the membrane as a helical span at residues 159-179 (SFMLFLSLSLHSVFEGLAIGL). At 180–185 (QTTNAK) the chain is on the extracellular side. Residues 186-206 (VLEICIAILVHKSIIVFSLSV) form a helical membrane-spanning segment. The Cytoplasmic segment spans residues 207-219 (KLVQSAVKPLWVV). The chain crosses the membrane as a helical span at residues 220 to 240 (LYVTVFAIMSPLGIGIGIVVI). Over 241–247 (ETERQAG) the chain is Extracellular. A helical membrane pass occupies residues 248–268 (GLIQAVLEGLAAGTFIYITFL). Topologically, residues 269–281 (EILPHELNSSERP) are cytoplasmic. The chain crosses the membrane as a helical span at residues 282–302 (LLKVLFLLCGFSIMAALCFLG).

This sequence belongs to the ZIP transporter (TC 2.A.5) family. As to expression, ubiquitous. Highest levels in ovary, high levels in heart, eye, kidney and brain, moderate levels in intestine and low levels in gill and skin.

Its subcellular location is the cell membrane. It localises to the endoplasmic reticulum membrane. The enzyme catalyses Zn(2+)(in) = Zn(2+)(out). Transporter for the divalent cation Zn(2+). Mediates the influx of Zn(2+) into cells from extracellular space. The protein is Zinc transporter ZIP1 (slc39a1) of Danio rerio (Zebrafish).